The chain runs to 155 residues: Eosinophil cationic protein (155 aa).

The signal sequence occupies residues 1–25; the sequence is MGLKLLESRLCLLLSLGLVLMLASC. Catalysis depends on histidine 38, which acts as the Proton acceptor. Cystine bridges form between cysteine 47-cysteine 106, cysteine 61-cysteine 118, cysteine 79-cysteine 133, and cysteine 86-cysteine 94. A substrate-binding site is contributed by 62–66; sequence KDINT. Asparagine 88 and asparagine 107 each carry an N-linked (GlcNAc...) asparagine glycan. The Proton donor role is filled by histidine 150.

The protein belongs to the pancreatic ribonuclease family.

It is found in the cytoplasmic granule. Its function is as follows. Cytotoxin and helminthotoxin with ribonuclease activity. Possesses a wide variety of biological activities. The protein is Eosinophil cationic protein (Rnase3) of Rattus norvegicus (Rat).